We begin with the raw amino-acid sequence, 328 residues long: Bifunctional phosphopantetheine adenylyltransferase/NTP phosphatase (328 aa).

Positions 1–152 are phosphopantetheine adenylyltransferase; the sequence is MITVVGGTFS…TNGKRITPLK (152 aa). The interval 153 to 328 is inosine/xanthosine triphosphatase; sequence VGISTRNEAK…DFYDSTYTPP (176 aa).

The protein in the N-terminal section; belongs to the eukaryotic CoaD family. It in the C-terminal section; belongs to the YjjX NTPase family. Mg(2+) is required as a cofactor. Mn(2+) serves as cofactor.

The protein localises to the cytoplasm. The enzyme catalyses (R)-4'-phosphopantetheine + ATP + H(+) = 3'-dephospho-CoA + diphosphate. It carries out the reaction XTP + H2O = XDP + phosphate + H(+). The catalysed reaction is ITP + H2O = IDP + phosphate + H(+). Its pathway is cofactor biosynthesis; coenzyme A biosynthesis. Functionally, reversibly transfers an adenylyl group from ATP to 4'-phosphopantetheine, yielding dephospho-CoA (dPCoA) and pyrophosphate. In terms of biological role, phosphatase that hydrolyzes non-canonical purine nucleotides such as XTP and ITP to their respective diphosphate derivatives. Probably excludes non-canonical purines from DNA/RNA precursor pool, thus preventing their incorporation into DNA/RNA and avoiding chromosomal lesions. The polypeptide is Bifunctional phosphopantetheine adenylyltransferase/NTP phosphatase (coaD) (Thermoplasma acidophilum (strain ATCC 25905 / DSM 1728 / JCM 9062 / NBRC 15155 / AMRC-C165)).